The chain runs to 359 residues: MLSAASRVVSRAAVHCALRSPPPEARALAMSRPPPPRVASVLGTMEMGRRMDAPASAAAVRAFLERGHTELDTAFMYSDGQSETILGGLGLGLGGGDCRVKIATKANPWDGKSLKPDSVRSQLETSLKRLQCPQVDLFYLHAPDHGTPVEETLHACQRLHQEGKFVELGLSNYASWEVAEICTLCKSNGWILPTVYQGMYNATTRQVETELFPCLRHFGLRFYAYNPLAGGLLTGKYKYEDKDGKQPVGRFFGNSWAETYRNRFWKEHHFEAIALVEKALQAAYGASAPSVTSAALRWMYHHSQLQGAHGDAVILGMSSLEQLEQNLAATEEGPLEPAVVDAFNQAWHLVAHECPNYFR.

The N-terminal 38 residues, 1-38, are a transit peptide targeting the mitochondrion; it reads MLSAASRVVSRAAVHCALRSPPPEARALAMSRPPPPRV. Position 40 is a phosphoserine (S40). D72 provides a ligand contact to NADP(+). Y77 (proton donor) is an active-site residue. K128 is subject to N6-acetyllysine. Position 141 (H141) interacts with substrate. NADP(+) contacts are provided by residues 171-172, Q197, 226-236, and R250; these read SN and NPLAGGLLTGK. Position 236 is an N6-succinyllysine (K236). S255 bears the Phosphoserine mark. Substrate is bound by residues Y260 and R263. 318 to 326 is an NADP(+) binding site; sequence SSLEQLEQN. R359 is a substrate binding site.

It belongs to the aldo/keto reductase family. Aldo/keto reductase 2 subfamily. Homodimer. As to expression, detected in brain, liver, small intestine and testis, and at lower levels in heart, prostate, skeletal muscle and spleen. Detected in kidney proximal and distal tubules, endothelial cells lining the Bowman's capsules and some cysts. Detected at low levels in lung and pancreas (at protein level). Widely expressed.

It is found in the mitochondrion. It localises to the golgi apparatus. The protein localises to the cytoplasm. The catalysed reaction is 4-hydroxybutanoate + NADP(+) = succinate semialdehyde + NADPH + H(+). Its function is as follows. Catalyzes the NADPH-dependent reduction of succinic semialdehyde to gamma-hydroxybutyrate. May have an important role in producing the neuromodulator gamma-hydroxybutyrate (GHB). Has broad substrate specificity. Has NADPH-dependent aldehyde reductase activity towards 2-carboxybenzaldehyde, 2-nitrobenzaldehyde and pyridine-2-aldehyde (in vitro). Can reduce 1,2-naphthoquinone and 9,10-phenanthrenequinone (in vitro). Can reduce the dialdehyde protein-binding form of aflatoxin B1 (AFB1) to the non-binding AFB1 dialcohol. May be involved in protection of liver against the toxic and carcinogenic effects of AFB1, a potent hepatocarcinogen. The sequence is that of Aflatoxin B1 aldehyde reductase member 2 (AKR7A2) from Homo sapiens (Human).